The sequence spans 296 residues: MTTTLASRPDGEGSVQVKLDPKVNIEEGALVIAVYGKGGIGKSTTSSNLSAAFSKLGKKVLQIGCDPKHDSTFTLTHKMVPTVIDILEEVDFHSEELRPEDFMFKGFNGVQCVESGGPPAGTGCGGYVTGQTVKLLKEHHLLEDTDVVIFDVLGDVVCGGFAAPLQHANYCLIVTANDFDSIFAMNRIVAAINAKAKNYKVRLGGVIANRSADLDQIEKFNERTGLKTMAHFRNVDAIRRSRLKKCTIFEMDPEEEGVKEVQNEYLSLAKKMIDNVEPLEVEPLKDREIFDLLGFD.

Residues 39 to 44 and Lys-68 each bind ATP; that span reads GIGKST. Position 43 (Ser-43) interacts with Mg(2+). [4Fe-4S] cluster-binding residues include Cys-124 and Cys-158. ATP is bound at residue 209-210; it reads NR.

This sequence belongs to the NifH/BchL/ChlL family. Homodimer. Protochlorophyllide reductase is composed of three subunits; ChlL, ChlN and ChlB. [4Fe-4S] cluster serves as cofactor.

The enzyme catalyses chlorophyllide a + oxidized 2[4Fe-4S]-[ferredoxin] + 2 ADP + 2 phosphate = protochlorophyllide a + reduced 2[4Fe-4S]-[ferredoxin] + 2 ATP + 2 H2O. The protein operates within porphyrin-containing compound metabolism; chlorophyll biosynthesis (light-independent). In terms of biological role, component of the dark-operative protochlorophyllide reductase (DPOR) that uses Mg-ATP and reduced ferredoxin to reduce ring D of protochlorophyllide (Pchlide) to form chlorophyllide a (Chlide). This reaction is light-independent. The L component serves as a unique electron donor to the NB-component of the complex, and binds Mg-ATP. This is Light-independent protochlorophyllide reductase iron-sulfur ATP-binding protein from Prochlorococcus marinus (strain MIT 9211).